Reading from the N-terminus, the 244-residue chain is 2-C-methyl-D-erythritol 4-phosphate cytidylyltransferase (244 aa).

Belongs to the IspD/TarI cytidylyltransferase family. IspD subfamily.

The enzyme catalyses 2-C-methyl-D-erythritol 4-phosphate + CTP + H(+) = 4-CDP-2-C-methyl-D-erythritol + diphosphate. The protein operates within isoprenoid biosynthesis; isopentenyl diphosphate biosynthesis via DXP pathway; isopentenyl diphosphate from 1-deoxy-D-xylulose 5-phosphate: step 2/6. Its function is as follows. Catalyzes the formation of 4-diphosphocytidyl-2-C-methyl-D-erythritol from CTP and 2-C-methyl-D-erythritol 4-phosphate (MEP). The polypeptide is 2-C-methyl-D-erythritol 4-phosphate cytidylyltransferase (Corynebacterium diphtheriae (strain ATCC 700971 / NCTC 13129 / Biotype gravis)).